A 130-amino-acid chain; its full sequence is Secreted cysteine-rich effector 2 (130 aa).

A signal peptide spans 1–23 (MLINAARLLLPAAALVHLSLAWA). The interval 68–85 (LKNGEDWCKHCASPRVSV) is plant immunity suppression domain.

It is found in the secreted. The protein resides in the host cell. Its subcellular location is the host periplasm. In terms of biological role, secreted effector required for full virulence of U.virens. Inhibits host pathogen-associated molecular pattern-triggered immunity including flg22- and chitin-induced defense gene expression and oxidative burst. The polypeptide is Secreted cysteine-rich effector 2 (Ustilaginoidea virens (Rice false smut fungus)).